The sequence spans 441 residues: Ribosomal protein uS12 methylthiotransferase RimO (441 aa).

An MTTase N-terminal domain is found at 8–118 (PKIGFVSLGC…VLQHVHHYVP (111 aa)). Residues C17, C53, C82, C150, C154, and C157 each coordinate [4Fe-4S] cluster. The Radical SAM core domain occupies 136-373 (LTPRHYAYLK…MQLQQQISAE (238 aa)). One can recognise a TRAM domain in the interval 376-441 (QEKVGREILV…DEYDLWGSRV (66 aa)).

It belongs to the methylthiotransferase family. RimO subfamily. [4Fe-4S] cluster serves as cofactor.

The protein localises to the cytoplasm. It carries out the reaction L-aspartate(89)-[ribosomal protein uS12]-hydrogen + (sulfur carrier)-SH + AH2 + 2 S-adenosyl-L-methionine = 3-methylsulfanyl-L-aspartate(89)-[ribosomal protein uS12]-hydrogen + (sulfur carrier)-H + 5'-deoxyadenosine + L-methionine + A + S-adenosyl-L-homocysteine + 2 H(+). Catalyzes the methylthiolation of an aspartic acid residue of ribosomal protein uS12. The polypeptide is Ribosomal protein uS12 methylthiotransferase RimO (Salmonella paratyphi B (strain ATCC BAA-1250 / SPB7)).